The primary structure comprises 375 residues: Metal tolerance protein B (375 aa).

At Met1–Arg57 the chain is on the cytoplasmic side. A helical membrane pass occupies residues Leu58–Lys78. The Vacuolar portion of the chain corresponds to Ala79 to Val84. A helical transmembrane segment spans residues Met85–Ile105. The Cytoplasmic portion of the chain corresponds to Lys106–Arg122. A helical membrane pass occupies residues Leu123–Ile143. Topologically, residues His144–Glu160 are vacuolar. Residues Ile161–Gly181 form a helical membrane-spanning segment. The tract at residues His182–His206 is required for zinc-binding. The Cytoplasmic portion of the chain corresponds to His182 to Leu240. Residues His241–Val261 form a helical membrane-spanning segment. The Vacuolar segment spans residues Lys262–Lys264. The helical transmembrane segment at Trp265–Leu285 threads the bilayer. Topologically, residues Pro286–Glu375 are cytoplasmic.

Belongs to the cation diffusion facilitator (CDF) transporter (TC 2.A.4) family. SLC30A subfamily.

The protein resides in the vacuole membrane. Functionally, involved in sequestration of excess zinc in the cytoplasm into vacuoles to maintain zinc homeostasis. In Arabidopsis thaliana (Mouse-ear cress), this protein is Metal tolerance protein B (MTPB).